We begin with the raw amino-acid sequence, 78 residues long: Translation initiation factor IF-1, plastid (78 aa).

Positions 1–72 (MKKQDLIDME…TKGRITYRLR (72 aa)) constitute an S1-like domain.

This sequence belongs to the IF-1 family. As to quaternary structure, component of the 30S ribosomal translation pre-initiation complex which assembles on the 30S ribosome in the order IF-2 and IF-3, IF-1 and N-formylmethionyl-tRNA(fMet); mRNA recruitment can occur at any time during PIC assembly.

The protein localises to the plastid. One of the essential components for the initiation of protein synthesis. Stabilizes the binding of IF-2 and IF-3 on the 30S subunit to which N-formylmethionyl-tRNA(fMet) subsequently binds. Helps modulate mRNA selection, yielding the 30S pre-initiation complex (PIC). Upon addition of the 50S ribosomal subunit IF-1, IF-2 and IF-3 are released leaving the mature 70S translation initiation complex. The sequence is that of Translation initiation factor IF-1, plastid from Aneura mirabilis (Parasitic liverwort).